A 320-amino-acid chain; its full sequence is MSDQPETPSNSRNSHENVGAKKADANVASKFRSLHISETTKPLTSTRALYKTTRNNSRGATEFHKHVCKLAWKYLACIDKSSISHIEIEMKFGVITDKRTHRRMTPHNKPFIVQNRNGRLVSNVPEQMFSSFQELLRSKSENPSKCAPRVVKQVQKYTKDSIYNCNNASKVGKLTSWRCSEDLRNKELKLTYIKKVRVKDFLIRYPQSSLDAKISISLEVPEYETSAAFRNGFILQRTKSRSTYTFNDKMPLHLDLTKVTTTRRNSHQYTSHEVEVEMDPIFKETISANDREKFNEYMCSFLNASDLIRKAAERDNMLTT.

Residues 1-12 (MSDQPETPSNSR) show a composition bias toward polar residues. Positions 1-23 (MSDQPETPSNSRNSHENVGAKKA) are disordered. Residues 13-23 (NSHENVGAKKA) show a composition bias toward basic and acidic residues.

This sequence belongs to the fungal TPase family. Mg(2+) is required as a cofactor. It depends on Mn(2+) as a cofactor.

The protein localises to the cytoplasm. It localises to the nucleus. It carries out the reaction a 5'-end triphospho-ribonucleoside in mRNA + H2O = a 5'-end diphospho-ribonucleoside in mRNA + phosphate + H(+). Functionally, probably involved in an RNA processing event other than mRNA capping. Releases gamma-phosphate from the 5'-end of RNA to produce a diphosphate terminus. The chain is Polynucleotide 5'-triphosphatase CTL1 from Saccharomyces cerevisiae (strain ATCC 204508 / S288c) (Baker's yeast).